The following is a 259-amino-acid chain: Global transcriptional regulator CodY (259 aa).

Residues 1–155 (MNLLEKTRKI…GATVVGMEIL (155 aa)) are GAF domain. Residues 203–222 (ASKIADRVGITRSVIVNALR) constitute a DNA-binding region (H-T-H motif). S215 bears the Phosphoserine mark.

It belongs to the CodY family.

Its subcellular location is the cytoplasm. DNA-binding global transcriptional regulator which is involved in the adaptive response to starvation and acts by directly or indirectly controlling the expression of numerous genes in response to nutrient availability. During rapid exponential growth, CodY is highly active and represses genes whose products allow adaptation to nutrient depletion. This chain is Global transcriptional regulator CodY, found in Geobacillus kaustophilus (strain HTA426).